A 548-amino-acid polypeptide reads, in one-letter code: Chaperonin GroEL (548 aa).

ATP is bound by residues 29 to 32 (TMGP), K50, 86 to 90 (DGTTT), G414, 478 to 480 (NAA), and D494.

Belongs to the chaperonin (HSP60) family. In terms of assembly, forms a cylinder of 14 subunits composed of two heptameric rings stacked back-to-back. Interacts with the co-chaperonin GroES.

It is found in the cytoplasm. The enzyme catalyses ATP + H2O + a folded polypeptide = ADP + phosphate + an unfolded polypeptide.. Functionally, together with its co-chaperonin GroES, plays an essential role in assisting protein folding. The GroEL-GroES system forms a nano-cage that allows encapsulation of the non-native substrate proteins and provides a physical environment optimized to promote and accelerate protein folding. May play a protective role against the defense mechanisms generated by the infected macrophages. In Legionella pneumophila, this protein is Chaperonin GroEL.